A 329-amino-acid chain; its full sequence is Olfactory receptor 10J3 (329 aa).

At 1–26 (MPKLNSTFVTEFLFEGFSSFRRQHKL) the chain is on the extracellular side. An N-linked (GlcNAc...) asparagine glycan is attached at Asn-5. Residues 27–47 (VFFVVFLTLYLLTLSGNVIIM) traverse the membrane as a helical segment. Residues 48 to 55 (TIIRLDHH) lie on the Cytoplasmic side of the membrane. Residues 56–76 (LHTPMYFFLCMLSISETCYTV) form a helical membrane-spanning segment. Residues 77–100 (AIIPHMLSGLLNPHQPIATQSCAT) are Extracellular-facing. A disulfide bond links Cys-98 and Cys-190. The chain crosses the membrane as a helical span at residues 101–121 (QLFFYLTFGINNCFLLTVMGY). Residues 122–140 (DRYVAICNPLRYSVIMGKR) lie on the Cytoplasmic side of the membrane. Residues 141 to 161 (ACIQLASGSLGIGLGMAIVQV) form a helical membrane-spanning segment. Residues 162–198 (TSVFGLPFCDAFVISHFFCDVRHLLKLACTDTTVNEI) are Extracellular-facing. Residues 199-218 (INFVVSVCVLVLPMGLVFIS) traverse the membrane as a helical segment. Residues 219 to 238 (YVLIISTILKIASAEGQKKA) lie on the Cytoplasmic side of the membrane. A helical membrane pass occupies residues 239–259 (FATCASHLTVVIIHYGCASII). The Extracellular portion of the chain corresponds to 260 to 272 (YLKPKSQSSLGQD). Residues 273 to 293 (RLISVTYTHHSPTEPCCVQPE) traverse the membrane as a helical segment. Topologically, residues 294–329 (EQGGQRCSAQSRGAKNSVSLMKRGCEGFSFAFINMY) are cytoplasmic.

The protein belongs to the G-protein coupled receptor 1 family.

It is found in the cell membrane. Odorant receptor. This chain is Olfactory receptor 10J3 (OR10J3), found in Homo sapiens (Human).